We begin with the raw amino-acid sequence, 231 residues long: Sugar fermentation stimulation protein homolog (231 aa).

The protein belongs to the SfsA family.

The protein is Sugar fermentation stimulation protein homolog of Citrifermentans bemidjiense (strain ATCC BAA-1014 / DSM 16622 / JCM 12645 / Bem) (Geobacter bemidjiensis).